The chain runs to 362 residues: Red-sensitive opsin (362 aa).

The Extracellular segment spans residues 1–49 (MAAWEAAFAARRRHEEEDTTRDSVFTYTNSNNTRGPFEGPNYHIAPRWV). N-linked (GlcNAc...) asparagine glycosylation is present at Asn31. A helical membrane pass occupies residues 50 to 74 (YNLTSVWMIFVVAASVFTNGLVLVA). Topologically, residues 75-86 (TWKFKKLRHPLN) are cytoplasmic. Residues 87-112 (WILVNLAVADLGETVIASTISVINQI) traverse the membrane as a helical segment. The Extracellular portion of the chain corresponds to 113–126 (SGYFILGHPMCVVE). Residues Cys123 and Cys200 are joined by a disulfide bond. Residues 127-146 (GYTVSACGITALWSLAIISW) traverse the membrane as a helical segment. Residues 147–165 (ERWFVVCKPFGNIKFDGKL) are Cytoplasmic-facing. Residues 166-189 (AVAGILFSWLWSCAWTAPPIFGWS) form a helical membrane-spanning segment. The Extracellular portion of the chain corresponds to 190–215 (RYWPHGLKTSCGPDVFSGSSDPGVQS). The chain crosses the membrane as a helical span at residues 216–243 (YMVVLMVTCCFFPLAIIILCYLQVWLAI). The Cytoplasmic segment spans residues 244–265 (RAVAAQQKESESTQKAEKEVSR). Residues 266–289 (MVVVMIVAYCFCWGPYTFFACFAA) traverse the membrane as a helical segment. Over 290–297 (ANPGYAFH) the chain is Extracellular. A helical transmembrane segment spans residues 298–322 (PLAAALPAYFAKSATIYNPIIYVFM). Position 309 is an N6-(retinylidene)lysine (Lys309). Residues 323 to 362 (NRQFRNCILQLFGKKVDDGSEVSTSRTEVSSVSNSSVSPA) are Cytoplasmic-facing.

This sequence belongs to the G-protein coupled receptor 1 family. Opsin subfamily. Post-translationally, phosphorylated on some or all of the serine and threonine residues present in the C-terminal region. As to expression, the color pigments are found in the cone photoreceptor cells.

Its subcellular location is the membrane. In terms of biological role, visual pigments are the light-absorbing molecules that mediate vision. They consist of an apoprotein, opsin, covalently linked to cis-retinal. This Gallus gallus (Chicken) protein is Red-sensitive opsin.